Consider the following 850-residue polypeptide: Endoribonuclease ysh-1 (850 aa).

Zn(2+)-binding residues include His83, His85, Asp87, His88, His173, and Asp194. Catalysis depends on His442, which acts as the Proton donor. His464 is a Zn(2+) binding site. 2 disordered regions span residues 685–708 (VKRS…PHSH) and 732–784 (SPIV…EQQL). Polar residues predominate over residues 744 to 754 (PTTKAITSPSE). Basic and acidic residues predominate over residues 755–766 (ETAKSSDVKSDA). The span at 767-781 (DADASMDVSEEDEDE) shows a compositional bias: acidic residues.

It belongs to the metallo-beta-lactamase superfamily. RNA-metabolizing metallo-beta-lactamase-like family. CPSF2/YSH1 subfamily.

It localises to the nucleus. Functionally, component of the cleavage factor I (CF I) involved in pre-mRNA 3'-end processing. This Neurospora crassa (strain ATCC 24698 / 74-OR23-1A / CBS 708.71 / DSM 1257 / FGSC 987) protein is Endoribonuclease ysh-1 (ysh-1).